The chain runs to 130 residues: Blasticidin-S deaminase (130 aa).

The region spanning Met1 to Glu129 is the CMP/dCMP-type deaminase domain. Ser28 provides a ligand contact to substrate. Position 54 (Cys54) interacts with Zn(2+). Glu56 functions as the Proton donor in the catalytic mechanism. Arg82 is a binding site for substrate. The Zn(2+) site is built by Cys88 and Cys91. Substrate-binding residues include Tyr126 and Trp128.

This sequence belongs to the cytidine and deoxycytidylate deaminase family. As to quaternary structure, homotetramer. It depends on Zn(2+) as a cofactor.

The catalysed reaction is blasticidin S + H2O + H(+) = deaminohydroxyblasticidin S + NH4(+). Its function is as follows. Catalyzes the deamination of the cytosine moiety of the antibiotics blasticidin S, cytomycin and acetylblasticidin S. The protein is Blasticidin-S deaminase (bsd) of Aspergillus terreus.